A 351-amino-acid chain; its full sequence is Nicotinate-nucleotide--dimethylbenzimidazole phosphoribosyltransferase (351 aa).

The active-site Proton acceptor is Glu-319.

The protein belongs to the CobT family.

The catalysed reaction is 5,6-dimethylbenzimidazole + nicotinate beta-D-ribonucleotide = alpha-ribazole 5'-phosphate + nicotinate + H(+). It participates in nucleoside biosynthesis; alpha-ribazole biosynthesis; alpha-ribazole from 5,6-dimethylbenzimidazole: step 1/2. Catalyzes the synthesis of alpha-ribazole-5'-phosphate from nicotinate mononucleotide (NAMN) and 5,6-dimethylbenzimidazole (DMB). The protein is Nicotinate-nucleotide--dimethylbenzimidazole phosphoribosyltransferase of Desulforamulus reducens (strain ATCC BAA-1160 / DSM 100696 / MI-1) (Desulfotomaculum reducens).